The chain runs to 91 residues: Acylphosphatase (91 aa).

In terms of domain architecture, Acylphosphatase-like spans 6-91 (CMRCYISGRV…WEDYITFDVL (86 aa)). Active-site residues include Arg21 and Asn39.

This sequence belongs to the acylphosphatase family.

It carries out the reaction an acyl phosphate + H2O = a carboxylate + phosphate + H(+). This is Acylphosphatase (acyP) from Legionella pneumophila (strain Lens).